The chain runs to 69 residues: Cold shock-like protein CspE (69 aa).

The CSD domain occupies 6 to 66 (GNVKWFNESK…GAKGPSAANV (61 aa)).

The protein localises to the cytoplasm. The sequence is that of Cold shock-like protein CspE (cspE) from Escherichia coli O6:H1 (strain CFT073 / ATCC 700928 / UPEC).